A 251-amino-acid polypeptide reads, in one-letter code: MRRKIVAGNWKLHGSRQFANELLGQVAAGLPLEGVDVVILPPLPYLGELVEDFGETGLAFGAQDVSSNEKGAYTGEVCAAMLVEVGARYGLVGHSERRQYHHESSELVARKFAAAQHAGLVPVLCVGETLEQREAGQTEAVIASQLAPVLELVGAAGFAQAVVAYEPVWAIGTGRTATKEQAQQVHAFIRGEVARIDARIADSLPIVYGGSVKPDNAGELFAQPDVDGGLVGGASLVAADFLAIARAAAAN.

9–11 (NWK) provides a ligand contact to substrate. The Electrophile role is filled by His94. The active-site Proton acceptor is the Glu166. Substrate-binding positions include Gly172, Ser211, and 232-233 (GG).

Belongs to the triosephosphate isomerase family. As to quaternary structure, homodimer.

The protein localises to the cytoplasm. It catalyses the reaction D-glyceraldehyde 3-phosphate = dihydroxyacetone phosphate. Its pathway is carbohydrate biosynthesis; gluconeogenesis. The protein operates within carbohydrate degradation; glycolysis; D-glyceraldehyde 3-phosphate from glycerone phosphate: step 1/1. Its function is as follows. Involved in the gluconeogenesis. Catalyzes stereospecifically the conversion of dihydroxyacetone phosphate (DHAP) to D-glyceraldehyde-3-phosphate (G3P). The polypeptide is Triosephosphate isomerase (Stenotrophomonas maltophilia (strain K279a)).